Reading from the N-terminus, the 186-residue chain is Nicotinamide-nucleotide adenylyltransferase (186 aa).

The protein belongs to the archaeal NMN adenylyltransferase family.

It is found in the cytoplasm. It carries out the reaction beta-nicotinamide D-ribonucleotide + ATP + H(+) = diphosphate + NAD(+). It functions in the pathway cofactor biosynthesis; NAD(+) biosynthesis; NAD(+) from nicotinamide D-ribonucleotide: step 1/1. This is Nicotinamide-nucleotide adenylyltransferase from Pyrococcus horikoshii (strain ATCC 700860 / DSM 12428 / JCM 9974 / NBRC 100139 / OT-3).